A 129-amino-acid chain; its full sequence is Small ribosomal subunit protein uS11 (129 aa).

It belongs to the universal ribosomal protein uS11 family. As to quaternary structure, part of the 30S ribosomal subunit. Interacts with proteins S7 and S18. Binds to IF-3.

Its function is as follows. Located on the platform of the 30S subunit, it bridges several disparate RNA helices of the 16S rRNA. Forms part of the Shine-Dalgarno cleft in the 70S ribosome. The sequence is that of Small ribosomal subunit protein uS11 from Vibrio campbellii (strain ATCC BAA-1116).